The chain runs to 100 residues: MASFLLSTLVFFLAALILVPQGLAQYHLNPVYEAPVNGPPVNKPPQKETPVQKPPQKEPPVHKSPRNEPPRHKPPHKKSHLHVTKRSYGKHATEEHSIHF.

The signal sequence occupies residues 1 to 24; the sequence is MASFLLSTLVFFLAALILVPQGLA. The interval 32-100 is disordered; the sequence is YEAPVNGPPV…HATEEHSIHF (69 aa). A run of 2 repeats spans residues 39–43 and 44–48. The segment at 39 to 78 is 8 X 5 AA approximate tandem repeats of P-P-[VQHR]-[NKH]-[EK]; it reads PPVNKPPQKETPVQKPPQKEPPVHKSPRNEPPRHKPPHKK. The 3; approximate repeat unit spans residues 49–53; the sequence is TPVQK. Repeat copies occupy residues 54–58 and 59–63. Residues 55–71 are compositionally biased toward basic and acidic residues; sequence PQKEPPVHKSPRNEPPR. One copy of the 6; approximate repeat lies at 64–68; the sequence is SPRNE. 2 repeat units span residues 69–73 and 74–78. Residues 72–89 show a composition bias toward basic residues; the sequence is HKPPHKKSHLHVTKRSYG. A compositionally biased stretch (basic and acidic residues) spans 91 to 100; that stretch reads HATEEHSIHF.

It belongs to the plant proline-rich protein superfamily. ENOD12 family.

It localises to the secreted. The protein localises to the cell wall. Its function is as follows. Involved in the infection process during the plant-rhizobium interaction. May also have an additional function in the proliferation of the bacteria. The sequence is that of Early nodulin-12 (ENOD12) from Vicia sativa (Spring vetch).